A 475-amino-acid chain; its full sequence is Methylenetetrahydrofolate--tRNA-(uracil-5-)-methyltransferase TrmFO (475 aa).

13 to 18 is an FAD binding site; the sequence is GAGLAG.

Belongs to the MnmG family. TrmFO subfamily. The cofactor is FAD.

The protein localises to the cytoplasm. It carries out the reaction uridine(54) in tRNA + (6R)-5,10-methylene-5,6,7,8-tetrahydrofolate + NADH + H(+) = 5-methyluridine(54) in tRNA + (6S)-5,6,7,8-tetrahydrofolate + NAD(+). It catalyses the reaction uridine(54) in tRNA + (6R)-5,10-methylene-5,6,7,8-tetrahydrofolate + NADPH + H(+) = 5-methyluridine(54) in tRNA + (6S)-5,6,7,8-tetrahydrofolate + NADP(+). In terms of biological role, catalyzes the folate-dependent formation of 5-methyl-uridine at position 54 (M-5-U54) in all tRNAs. The protein is Methylenetetrahydrofolate--tRNA-(uracil-5-)-methyltransferase TrmFO of Bradyrhizobium diazoefficiens (strain JCM 10833 / BCRC 13528 / IAM 13628 / NBRC 14792 / USDA 110).